Consider the following 135-residue polypeptide: Centromere protein S (135 aa).

The disordered stretch occupies residues 103-135; the sequence is SLEQKEKKKKKSVSGGNVSRNSDMDTVVPESKD.

The protein belongs to the TAF9 family. CENP-S/MHF1 subfamily. As to quaternary structure, heterodimer with CENPX, sometimes called MHF; this interaction stabilizes both partners. MHF heterodimers can assemble to form tetrameric structures. MHF also coassemble with CENPT-CENPW heterodimers at centromeres to form the tetrameric CENP-T-W-S-X complex. Forms a discrete complex with FANCM and CENPX, called FANCM-MHF; this interaction, probably mediated by direct binding between CENPS and FANCM, leads to synergistic activation of double-stranded DNA binding and strongly stimulates FANCM-mediated DNA remodeling. Recruited by FANCM to the Fanconi anemia (FA) core complex, which consists of CENPS, CENPX, FANCA, FANCB, FANCC, FANCE, FANCF, FANCG, FANCL, FANCM, FAAP24 and FAAP100. The FA core complex associates with Bloom syndrome (BLM) complex, which consists of at least BLM, DNA topoisomerase 3-alpha (TOP3A), RMI1/BLAP75, RPA1/RPA70 and RPA2/RPA32. The super complex between FA and BLM is called BRAFT. Component of the CENPA-CAD complex, composed of CENPI, CENPK, CENPL, CENPO, CENPP, CENPQ, CENPR and CENPS. The CENPA-CAD complex is probably recruited on centromeres by the CENPA-NAC complex, at least composed of CENPA, CENPC, CENPH, CENPM, CENPN, CENPT and CENPU.

It localises to the nucleus. Its subcellular location is the chromosome. The protein resides in the centromere. The protein localises to the kinetochore. DNA-binding component of the Fanconi anemia (FA) core complex. Required for the normal activation of the FA pathway, leading to monoubiquitination of the FANCI-FANCD2 complex in response to DNA damage, cellular resistance to DNA cross-linking drugs, and prevention of chromosomal breakage. In complex with CENPX (MHF heterodimer), crucial cofactor for FANCM in both binding and ATP-dependent remodeling of DNA. Stabilizes FANCM. In complex with CENPX and FANCM (but not other FANC proteins), rapidly recruited to blocked forks and promotes gene conversion at blocked replication forks. In complex with CENPT, CENPW and CENPX (CENP-T-W-S-X heterotetramer), involved in the formation of a functional kinetochore outer plate, which is essential for kinetochore-microtubule attachment and faithful mitotic progression. As a component of MHF and CENP-T-W-S-X complexes, binds DNA and bends it to form a nucleosome-like structure. DNA-binding function is fulfilled in the presence of CENPX, with the following preference for DNA substates: Holliday junction &gt; double-stranded &gt; splay arm &gt; single-stranded. Does not bind DNA on its own. The chain is Centromere protein S (cenps) from Xenopus laevis (African clawed frog).